A 1169-amino-acid chain; its full sequence is MRKKQKLPFDKLAIALMSTSILLNAQSDIKANTVTEDTPATEQAVEVPQQTAVSEEAPSSSSKETNPPQTPDDAEETVADKANDLAPQAPAKTADIPATSKETIRDLNDPSHVKTLQEKAGKGAGTVVAVIDAGFDKNHEAWRLTDKSKARYQSKEDLEKAKKDHGITYGEWVNDKVAYYHDYSKDGKTAVDQEHGTHVSGILSGNAPSETKEPYRLEGAMPEAQLLLMRVEIVNGLADYARNYAQAIRDAVNLGAKVINMSFGNAALAYANLPDETKKAFDYAKSKGVSIVTSAGNDSSFGGKTRLPLADHPDYGVVGTPAAADSTLTVASYSPDKQLTETATVKTADQQDKEMPVLSTNRFEPNKAYDYAYANRGTKEDDFKDVKGKIALIERGDIDFKDKIANAKKAGAVGVLIYDNQDKGFPIELPNVDQMPAAFISRKDGLLLKDNSKKTITFNATPKVLPTASGTKLSRFSSWGLTADGNIKPDIAAPGQDILSSVANNKYAKLSGTSMSAPLVAGIMGLLQKQYETQYPDMTPSERLDLAKKVLMSSATALYDEDEKAYFSPRQQGAGAVDAKKASAATMYVTDKDNTSSKVHLNNVSDKFEVTVTVHNKSDKPQELYYQATVQTDKVDGKHFALAPKALYETSWQKITIPANSSKQVTVPIDASRFSKDLLAQMKNGYFLEGFVRFKQDPTKEELMSIPYIGFRGDFGNLSALEKPIYDSKDGSSYYHEANSDAKDQLDGDGLQFYALKNNFTALTTESNPWTIIKAVKEGVENIEDIESSEITETIFAGTFAKQDDDSHYYIHRHANGKPYAAISPNGDGNRDYVQFQGTFLRNAKNLVAEVLDKEGDVVWTSEVTEQVVKNYNNDLASTLGSTRFEKTRWDGKDKDGKVVANGTYTYRVRYTPISSGAKEQHTDFDVIVDNTTPEAATSATFSAEDRRLTLASKPKTSQPVYRERIAYTYMDEDLPTTEYISPNEDGTFTLPEEAETMEGATVPLKMSDFTYVVEDMAGNITYTPVTNLLEGHSNKPEQDGSDQVPDKTPETKPEQDGSGQAPDKKPEAKPEQDGSGQAPDKKPETKPEKDSSGQTPGKTPQKGQPSRTLEKRSSKRALATKASARDQLPTTNDKDTNRLHLLKLVMTTFFFGLVAHIFKTKRQKETKK.

The signal sequence occupies residues 1-31; that stretch reads MRKKQKLPFDKLAIALMSTSILLNAQSDIKA. The segment at 33–111 is disordered; the sequence is TVTEDTPATE…ETIRDLNDPS (79 aa). The span at 48–67 shows a compositional bias: polar residues; it reads PQQTAVSEEAPSSSSKETNP. The 483-residue stretch at 101–583 folds into the Peptidase S8 domain; sequence KETIRDLNDP…AGAVDAKKAS (483 aa). Basic and acidic residues predominate over residues 102 to 111; that stretch reads ETIRDLNDPS. Residues Asp-132, His-195, and Ser-514 each act as charge relay system in the active site. Residues 1028–1135 are disordered; that stretch reads NLLEGHSNKP…RDQLPTTNDK (108 aa). Basic and acidic residues-rich tracts occupy residues 1033-1056, 1063-1073, and 1080-1092; these read HSNKPEQDGSDQVPDKTPETKPEQ, PDKKPEAKPEQ, and PDKKPETKPEKDS. 4 tandem repeats follow at residues 1036–1052, 1053–1069, 1070–1086, and 1087–1103. Residues 1036–1103 form a 4 X 17 AA tandem repeats region; that stretch reads KPEQDGSDQV…GQTPGKTPQK (68 aa). Residues 1093 to 1108 are compositionally biased toward polar residues; it reads SGQTPGKTPQKGQPSR. The LPXTG sorting signal signature appears at 1129 to 1133; sequence LPTTN. Thr-1132 is subject to Pentaglycyl murein peptidoglycan amidated threonine. The propeptide at 1133-1169 is removed by sortase; it reads NDKDTNRLHLLKLVMTTFFFGLVAHIFKTKRQKETKK.

It belongs to the peptidase S8 family. Cleaved by SpeB protease; leading to its degradation. Degradation by SpeB is probably strictly regulated to preserve integrity of C5a peptidase.

It localises to the secreted. Its subcellular location is the cell wall. It catalyses the reaction The primary cleavage site is at 67-His-|-Lys-68 in human C5a with a minor secondary cleavage site at 58-Ala-|-Ser-59.. In terms of biological role, this virulence factor of S.pyogenes specifically cleaves the human serum chemotaxin C5a at '68-Lys-|-Asp-69' bond near its C-terminus, destroying its ability to serve as a chemoattractant. The protein is C5a peptidase (scpA) of Streptococcus pyogenes serotype M3 (strain ATCC BAA-595 / MGAS315).